Here is a 751-residue protein sequence, read N- to C-terminus: MIPPAGSTPPGEALIPSVAPQDFWRSPISGYSGSVTRHISHRANNFKRHPKRRKYIRPSPPPPPNTPCPIELVDFEDLHPQRSFWELLFNGCILFGIEFSYAMETAYVTPVLLQMGLPDQLYSLVWFISPILGFLLQPLLGAWSDRCTSRFGRRRPFILVLAIGALLGLSLLLNGRDIGMALADTATNHKWGILLTVCGVVLMDFSADSADNPSHAYMMDVCGPVDQDRGLNIHALMAGLGGGFGYVVGGIHWDKTSFGRALGGQLRVIYIFTAITLSVTTVFTLVSIPERPLRPLGEKRTAMKSPSLPLPPSPPVLLEEGAGDTLPSTTATSLYASFSSPISPPSPLTPKYGSFISRDSSLTGINEFASSFGTSNIDSVLIDCFTAGHDNYLALPSSVPRQAISVSFPRAPDGFYCQERGLERREGPLTLGLDGDVLRVGSLDTSKPRASGILKRPQTLALPDVAGGNGPETSRRRNVTFSQQVANILLNGVKYESELTGSSEQSEQPLSLRRLCSTIYNMPRPVRNLCVNHFLGWLSFEGMLLFYTDFMGEVVFQGDPKAPHASEAYQKYNSGVTMGCWGMCIYAFSAAFYSAILEKLEECLSVRTLYFIAYLLFGLGTGLATLSRNLYVVLSLCTHYGILFSTLCTLPYSLLCDYYQSKKFAGSSADGTRRGMGVDISLLSCQYFLAQILVSLVLGPLTSAVGSANGVMYFASLVSFLGCLYSSLCVTYEIPSADAADEERQPLLLNV.

Helical transmembrane passes span 93–113, 123–143, 155–175, 191–211, 233–253, and 268–288; these read ILFG…PVLL, SLVW…LGAW, RPFI…LLNG, WGIL…DSAD, IHAL…GIHW, and VIYI…LVSI. Phosphothreonine is present on Thr-500. Helical transmembrane passes span 536 to 556, 576 to 596, 606 to 626, 630 to 650, 688 to 708, and 710 to 730; these read GWLS…EVVF, VTMG…YSAI, VRTL…LATL, LYVV…LCTL, FLAQ…VGSA, and GVMY…SLCV.

It belongs to the glycoside-pentoside-hexuronide (GPH) cation symporter transporter (TC 2.A.2) family. As to expression, predominantly expressed in brain.

The protein localises to the membrane. The enzyme catalyses D-galactose(in) + H(+)(in) = D-galactose(out) + H(+)(out). It catalyses the reaction D-glucose(out) + H(+)(out) = D-glucose(in) + H(+)(in). Proton-associated glucose transporter in the brain. The polypeptide is Proton-associated sugar transporter A (Rattus norvegicus (Rat)).